A 256-amino-acid chain; its full sequence is MASNNDSIKKTLGVVIGLSLVCSIIVSTAAVGLRDKQKANAVLDKQSKIVEVAGIDANGKKVPELFAEYIEPRLVDLETGNFTEGNASTYDQREASKDAERSIALTPEEDVADIRRRANTAVVYLVKDQDEVQKVILPMHGKGLWSMMYAFVAVETDGNTVSAITYYEQGETPGLGGEVENPSWRDQFIGKKLYNEDHQPAIKVVKGGAPQGSEHGVDGLSGATLTSNGVQHTFDFWLGDKGFGPFLAKVRDGELN.

The chain crosses the membrane as a helical span at residues 12-32; it reads LGVVIGLSLVCSIIVSTAAVG. T224 carries the post-translational modification FMN phosphoryl threonine.

Belongs to the NqrC family. In terms of assembly, composed of six subunits; NqrA, NqrB, NqrC, NqrD, NqrE and NqrF. It depends on FMN as a cofactor.

The protein resides in the cell inner membrane. It carries out the reaction a ubiquinone + n Na(+)(in) + NADH + H(+) = a ubiquinol + n Na(+)(out) + NAD(+). Its activity is regulated as follows. This reaction is tightly coupled to the Na(+) pumping activity and specifically requires Na(+) for activity. Inhibited by korormicin and 2-N-heptyl-4-hydroxyquinoline N-oxide (HQNO). Its function is as follows. NQR complex catalyzes the reduction of ubiquinone-1 to ubiquinol by two successive reactions, coupled with the transport of Na(+) ions from the cytoplasm to the periplasm. NqrA to NqrE are probably involved in the second step, the conversion of ubisemiquinone to ubiquinol. This is Na(+)-translocating NADH-quinone reductase subunit C from Vibrio alginolyticus.